A 637-amino-acid polypeptide reads, in one-letter code: Epithelial sodium channel subunit alpha (637 aa).

Residues 1–34 (MGTASRGGSVKAEKMPEGEKTRQCKQETEQQQKE) form a disordered region. The Cytoplasmic segment spans residues 1 to 76 (MGTASRGGSV…VCSKKNKMKT (76 aa)). Over residues 11–34 (KAEKMPEGEKTRQCKQETEQQQKE) the composition is skewed to basic and acidic residues. The helical transmembrane segment at 77–97 (AFWSVLFILTFGLMYWQFGIL) threads the bilayer. Residues 98–548 (YREYFSYPVN…NQWSLWFGSS (451 aa)) are Extracellular-facing. Disulfide bonds link Cys-125-Cys-292, Cys-217-Cys-224, Cys-269-Cys-276, Cys-380-Cys-465, Cys-402-Cys-442, Cys-402-Cys-461, Cys-406-Cys-457, Cys-415-Cys-442, Cys-415-Cys-465, and Cys-417-Cys-431. A helical membrane pass occupies residues 549 to 569 (VLSVMELAELILDFTVITFIL). Residues 570–637 (AFRWFRSKQW…PSKDGETGLE (68 aa)) lie on the Cytoplasmic side of the membrane.

It belongs to the amiloride-sensitive sodium channel (TC 1.A.6) family. SCNN1A subfamily. As to quaternary structure, heterotrimer; containing an alpha/SCNN1A, a beta/SCNN1B and a gamma/SCNN1G subunit. In terms of tissue distribution, the long isoform has been found in cochlea, colon, and cartilage. The short isoform is only found in cochlea.

The protein localises to the apical cell membrane. Its subcellular location is the cell projection. The protein resides in the cilium. It is found in the cytoplasmic granule. It localises to the cytoplasm. The protein localises to the cytoplasmic vesicle. Its subcellular location is the secretory vesicle. The protein resides in the acrosome. It is found in the flagellum. The catalysed reaction is Na(+)(in) = Na(+)(out). With respect to regulation, originally identified and characterized by its inhibition by the diuretic drug amiloride. This is one of the three pore-forming subunits of the heterotrimeric epithelial sodium channel (ENaC), a critical regulator of sodium balance and fluid homeostasis. ENaC operates in epithelial tissues, where it mediates the electrodiffusion of sodium ions from extracellular fluid through the apical membrane of cells, with water following osmotically. The polypeptide is Epithelial sodium channel subunit alpha (Gallus gallus (Chicken)).